Reading from the N-terminus, the 523-residue chain is Bifunctional purine biosynthesis protein PurH (523 aa).

The MGS-like domain maps to 1-150 (MSDVVPVRNA…KNHGDVAIAT (150 aa)).

This sequence belongs to the PurH family.

It catalyses the reaction (6R)-10-formyltetrahydrofolate + 5-amino-1-(5-phospho-beta-D-ribosyl)imidazole-4-carboxamide = 5-formamido-1-(5-phospho-D-ribosyl)imidazole-4-carboxamide + (6S)-5,6,7,8-tetrahydrofolate. The enzyme catalyses IMP + H2O = 5-formamido-1-(5-phospho-D-ribosyl)imidazole-4-carboxamide. It functions in the pathway purine metabolism; IMP biosynthesis via de novo pathway; 5-formamido-1-(5-phospho-D-ribosyl)imidazole-4-carboxamide from 5-amino-1-(5-phospho-D-ribosyl)imidazole-4-carboxamide (10-formyl THF route): step 1/1. It participates in purine metabolism; IMP biosynthesis via de novo pathway; IMP from 5-formamido-1-(5-phospho-D-ribosyl)imidazole-4-carboxamide: step 1/1. This Rhodopirellula baltica (strain DSM 10527 / NCIMB 13988 / SH1) protein is Bifunctional purine biosynthesis protein PurH.